A 427-amino-acid polypeptide reads, in one-letter code: Adenylosuccinate synthetase (427 aa).

GTP is bound by residues 11 to 17 (GDEGKGK) and 39 to 41 (GHT). Asp12 serves as the catalytic Proton acceptor. Residues Asp12 and Gly39 each coordinate Mg(2+). IMP-binding positions include 12 to 15 (DEGK), 37 to 40 (NAGH), Thr132, Arg146, Gln223, Thr238, and Arg302. Residue His40 is the Proton donor of the active site. Residue 298-304 (TTTGRPR) participates in substrate binding. GTP contacts are provided by residues Arg304, 330–332 (KLD), and 412–414 (GVG).

Belongs to the adenylosuccinate synthetase family. In terms of assembly, homodimer. Requires Mg(2+) as cofactor.

It is found in the cytoplasm. The enzyme catalyses IMP + L-aspartate + GTP = N(6)-(1,2-dicarboxyethyl)-AMP + GDP + phosphate + 2 H(+). It functions in the pathway purine metabolism; AMP biosynthesis via de novo pathway; AMP from IMP: step 1/2. Functionally, plays an important role in the de novo pathway and in the salvage pathway of purine nucleotide biosynthesis. Catalyzes the first committed step in the biosynthesis of AMP from IMP. The polypeptide is Adenylosuccinate synthetase (purA) (Dictyostelium discoideum (Social amoeba)).